The chain runs to 120 residues: Chaperonin GroEL (120 aa).

23-27 lines the ATP pocket; the sequence is DGTTT.

This sequence belongs to the chaperonin (HSP60) family. In terms of assembly, forms a cylinder of 14 subunits composed of two heptameric rings stacked back-to-back. Interacts with the co-chaperonin GroES.

The protein localises to the cytoplasm. The enzyme catalyses ATP + H2O + a folded polypeptide = ADP + phosphate + an unfolded polypeptide.. In terms of biological role, together with its co-chaperonin GroES, plays an essential role in assisting protein folding. The GroEL-GroES system forms a nano-cage that allows encapsulation of the non-native substrate proteins and provides a physical environment optimized to promote and accelerate protein folding. This Mycobacterium scrofulaceum protein is Chaperonin GroEL.